We begin with the raw amino-acid sequence, 593 residues long: Cytochrome c oxidase polypeptide 1 (593 aa).

The next 2 membrane-spanning stretches (helical) occupy residues 5-25 and 71-91; these read ASSITLTVLMGVLLVGVVAVL and IGILYGVYGTIAFAWGGVSVL. His-117 serves as a coordination point for Fe(II)-heme a. Helical transmembrane passes span 122–142, 154–174, 204–224, 246–266, 288–308, and 320–340; these read LFLFGTPMIAAFGNYFIPLLI, AIAFWLLPPGAILIWSGFLIP, GLHLTGVSATMGAINFIATIF, QSGLILFAFPLFGSALIMLLL, LFWFFGHPEVYVLVLPPMGIV, and LFGFKFVVYSTLAIGVLSFGV. Cu cation contacts are provided by His-294 and Tyr-298. The segment at residues 294–298 is a cross-link (1'-histidyl-3'-tyrosine (His-Tyr)); sequence HPEVY. Cu cation contacts are provided by His-343 and His-344. The next 5 helical transmembrane spans lie at 358–378, 401–421, 425–445, 467–487, and 506–526; these read FMAVSLAISIPSAVKVFNWIT, FIIGGVTGVFLAVIPIDLILH, YVVGHFHFIVYGAIGFALFAA, FWTALVGSNATFLAMLWLGYG, and LATVGAFLIGVSTLIWLFNMA. His-429 is a binding site for heme a3. Fe(II)-heme a is bound at residue His-431. The disordered stretch occupies residues 562–593; the sequence is TTVLPDGGDEAQSEADAVTDGGQPAADSDTES.

The protein belongs to the heme-copper respiratory oxidase family.

The protein resides in the cell membrane. The enzyme catalyses 4 Fe(II)-[cytochrome c] + O2 + 8 H(+)(in) = 4 Fe(III)-[cytochrome c] + 2 H2O + 4 H(+)(out). It participates in energy metabolism; oxidative phosphorylation. Cytochrome c oxidase is the component of the respiratory chain that catalyzes the reduction of oxygen to water. Subunits 1-3 form the functional core of the enzyme complex. CO I is the catalytic subunit of the enzyme. Electrons originating in cytochrome c are transferred via the copper A center of subunit 2 and heme A of subunit 1 to the bimetallic center formed by heme A3 and copper B. In Halobacterium salinarum (strain ATCC 700922 / JCM 11081 / NRC-1) (Halobacterium halobium), this protein is Cytochrome c oxidase polypeptide 1 (coxA2).